A 440-amino-acid chain; its full sequence is Indoleamine 2,3-dioxygenase qulI (440 aa).

His347 is a binding site for heme.

Belongs to the indoleamine 2,3-dioxygenase family. As to quaternary structure, monomer. Heme serves as cofactor.

It carries out the reaction D-tryptophan + O2 = N-formyl-D-kynurenine. The enzyme catalyses L-tryptophan + O2 = N-formyl-L-kynurenine. It participates in secondary metabolite biosynthesis. In terms of biological role, indoleamine 2,3-dioxygenase; part of the gene cluster that mediates the biosynthesis of quinolactacin A2 (QUL A2), a fungal alkaloid that features a quinolone-gamma-lactam hybrid, which is a potential pharmacophore for the treatment of cancer and Alzheimer's disease. The quinolone-gamma-lactam hybrid scaffold is synthesized from the combination of L-isoleucine (L-Ile) and the nonproteinogenic amino acid L-kynurenine, followed by quinolone cyclization, oxidative decarboxylation, and lactam formation. Additionally, the N-methyl group is derived from methionine, which might be catalyzed by an S-adenosylmethionine (SAM)-dependent methyltransferase. Bioconversion of L-tryptophan to L-kynurenine could be catalyzed by the indoleamine-2,3-dioxygenase (IDO) qulI to produce an unstable product, N-formyl-L-kynurenine, followed by kynurenine formamidase catalyzed hydrolysis. QulM then acts as a methyltransferase that methylates L-kynurenine at the N-4 position. The FMN-dependent alpha-hydroxy acid dehydrogenase qulF than functions as an oxidative decarboxylase which converts N-methylkynurenine into 2-aminobenzoylacetamide via 2 tandem reactions, including dehydrogenation and decarboxylation. An amidase located outside of the qul gene cluster further produces the unstable beta-keto acid precursor N-methyl-2-aminobenzoylacetate, which could be spontaneously dehydrated to form N-methyl-4-hydroxy-2-quinolone. The NRPS qulB is able to incorporate N-methyl-2-aminobenzoylacetate and efficiently compete with the spontaneous reaction. By further extending the beta-keto acid with L-Ile, qulA performs a Dieckmann condensation to form the gamma-lactam ring and release a 4-ketopyrrolidinone intermediate from the assembly line. This intermediate could plausibly further undergo a spontaneous cyclization to yield the final quinolone-gamma-lactam hybrid structure. The protein is Indoleamine 2,3-dioxygenase qulI of Penicillium citrinum.